The chain runs to 402 residues: Prostaglandin E2 receptor EP1 subtype (402 aa).

Residues 1–35 lie on the Extracellular side of the membrane; that stretch reads MSPCGPLNLSLAGEATTCAAPWVPNTSAVPPSGAS. N-linked (GlcNAc...) asparagine glycans are attached at residues asparagine 8 and asparagine 25. The helical transmembrane segment at 36–62 threads the bilayer; sequence PALPIFSMTLGAVSNLLALALLAQAAG. Residues 63 to 72 are Cytoplasmic-facing; that stretch reads RLRRRRSAAT. A helical membrane pass occupies residues 73–96; that stretch reads FLLFVASLLATDLAGHVIPGALVL. At 97–111 the chain is on the extracellular side; it reads RLYTAGRAPAGGACH. A disulfide bond links cysteine 110 and cysteine 188. The helical transmembrane segment at 112 to 133 threads the bilayer; sequence FLGGCMVFFGLCPLLLGCGMAV. The Cytoplasmic portion of the chain corresponds to 134–155; the sequence is ERCVGVTRPLLHAARVSVARAR. The chain crosses the membrane as a helical span at residues 156 to 177; the sequence is LALAAVAAVALAVALLPLARVG. Over 178–201 the chain is Extracellular; the sequence is RYELQYPGTWCFIGLGPPGGWRQA. A helical membrane pass occupies residues 202–227; it reads LLAGLFASLGLVALLAALVCNTLSGL. Over 228 to 294 the chain is Cytoplasmic; that stretch reads ALLRARWRRR…ARRARAHDVE (67 aa). The interval 238–266 is disordered; that stretch reads SRRPPPASGPDSRRRWGAHGPRSASASSA. The helical transmembrane segment at 295 to 321 threads the bilayer; sequence MVGQLVGIMVVSCICWSPMLVLVALAV. Topologically, residues 322–332 are extracellular; sequence GGWSSTSLQRP. The chain crosses the membrane as a helical span at residues 333–354; it reads LFLAVRLASWNQILDPWVYILL. Topologically, residues 355 to 402 are cytoplasmic; the sequence is RQAVLRQLLRLLPPRAGAKGGPAGLGLTPSAWEASSLRSSRHSGLSHF.

This sequence belongs to the G-protein coupled receptor 1 family. Post-translationally, phosphorylated. In terms of tissue distribution, abundant in kidney. Lower level expression in lung, skeletal muscle and spleen, lowest expression in testis and not detected in liver brain and heart.

The protein localises to the cell membrane. Its function is as follows. Receptor for prostaglandin E2 (PGE2). The activity of this receptor is mediated by G(q) proteins which activate a phosphatidylinositol-calcium second messenger system. May play a role as an important modulator of renal function. Implicated the smooth muscle contractile response to PGE2 in various tissues. This is Prostaglandin E2 receptor EP1 subtype (PTGER1) from Homo sapiens (Human).